The sequence spans 226 residues: PKHD-type hydroxylase MADE_1018490 (226 aa).

The 101-residue stretch at arginine 77 to serine 177 folds into the Fe2OG dioxygenase domain. Fe cation is bound by residues histidine 95, aspartate 97, and histidine 158. Arginine 168 contacts 2-oxoglutarate.

The cofactor is Fe(2+). L-ascorbate serves as cofactor.

The polypeptide is PKHD-type hydroxylase MADE_1018490 (Alteromonas mediterranea (strain DSM 17117 / CIP 110805 / LMG 28347 / Deep ecotype)).